A 226-amino-acid polypeptide reads, in one-letter code: Probable chemoreceptor glutamine deamidase CheD (226 aa).

The segment at 207–226 (PGGMRVERFDTPSRRDPVGA) is disordered.

The protein belongs to the CheD family.

It catalyses the reaction L-glutaminyl-[protein] + H2O = L-glutamyl-[protein] + NH4(+). Probably deamidates glutamine residues to glutamate on methyl-accepting chemotaxis receptors (MCPs), playing an important role in chemotaxis. This Bordetella bronchiseptica (strain ATCC BAA-588 / NCTC 13252 / RB50) (Alcaligenes bronchisepticus) protein is Probable chemoreceptor glutamine deamidase CheD.